We begin with the raw amino-acid sequence, 412 residues long: DNA primase DnaG (412 aa).

In terms of domain architecture, Toprim spans 165–243; the sequence is PELIIVEGRA…KLDYVARAPT (79 aa). Mg(2+)-binding residues include Glu171, Asp216, and Asp218.

The protein belongs to the archaeal DnaG primase family. In terms of assembly, forms a ternary complex with MCM helicase and DNA. Component of the archaeal exosome complex. Mg(2+) serves as cofactor.

The enzyme catalyses ssDNA + n NTP = ssDNA/pppN(pN)n-1 hybrid + (n-1) diphosphate.. Functionally, RNA polymerase that catalyzes the synthesis of short RNA molecules used as primers for DNA polymerase during DNA replication. Also part of the exosome, which is a complex involved in RNA degradation. Acts as a poly(A)-binding protein that enhances the interaction between heteromeric, adenine-rich transcripts and the exosome. The sequence is that of DNA primase DnaG from Sulfolobus acidocaldarius (strain ATCC 33909 / DSM 639 / JCM 8929 / NBRC 15157 / NCIMB 11770).